The chain runs to 317 residues: Beta-ketoacyl-[acyl-carrier-protein] synthase III (317 aa).

Residues Cys112 and His244 contribute to the active site. Positions 245–249 (QANLR) are ACP-binding. Residue Asn274 is part of the active site.

It belongs to the thiolase-like superfamily. FabH family. Homodimer.

The protein resides in the cytoplasm. The catalysed reaction is malonyl-[ACP] + acetyl-CoA + H(+) = 3-oxobutanoyl-[ACP] + CO2 + CoA. Its pathway is lipid metabolism; fatty acid biosynthesis. Functionally, catalyzes the condensation reaction of fatty acid synthesis by the addition to an acyl acceptor of two carbons from malonyl-ACP. Catalyzes the first condensation reaction which initiates fatty acid synthesis and may therefore play a role in governing the total rate of fatty acid production. Possesses both acetoacetyl-ACP synthase and acetyl transacylase activities. Its substrate specificity determines the biosynthesis of branched-chain and/or straight-chain of fatty acids. The sequence is that of Beta-ketoacyl-[acyl-carrier-protein] synthase III from Escherichia coli O9:H4 (strain HS).